The chain runs to 192 residues: I-Kappa-B like protein H1 (192 aa).

3 ANK repeats span residues 94 to 126 (KGAQ…DING), 131 to 161 (AGLT…DVKV), and 165 to 192 (GKET…SKKM).

It belongs to the polydnaviridae I-Kappa-B-like protein family.

Functionally, suppresses the host immune response through NF-kappa-B inactivation. Possesses ankyrin repeat domains required for NF-kappa-B binding but lacks the regulatory regions required for dissociation from NF-kappa-B and degradation. Therefore, prevents host NF-kappa-B release and subsequent activation. This Microplitis demolitor bracovirus (isolate Webb) (MdBV) protein is I-Kappa-B like protein H1 (H4).